Here is a 309-residue protein sequence, read N- to C-terminus: Curved DNA-binding protein (309 aa).

The J domain occupies 5–69; sequence DYYAILGVKP…ERRAEYDQLR (65 aa).

The protein localises to the cytoplasm. It is found in the nucleoid. DNA-binding protein that preferentially recognizes a curved DNA sequence. It is probably a functional analog of DnaJ; displays overlapping activities with DnaJ, but functions under different conditions, probably acting as a molecular chaperone in an adaptive response to environmental stresses other than heat shock. Lacks autonomous chaperone activity; binds native substrates and targets them for recognition by DnaK. Its activity is inhibited by the binding of CbpM. The protein is Curved DNA-binding protein of Serratia proteamaculans (strain 568).